A 328-amino-acid chain; its full sequence is GMP reductase (328 aa).

The Thioimidate intermediate role is filled by cysteine 176. Position 205 to 228 (isoleucine 205 to isoleucine 228) interacts with NADP(+).

Belongs to the IMPDH/GMPR family. GuaC type 2 subfamily.

The catalysed reaction is IMP + NH4(+) + NADP(+) = GMP + NADPH + 2 H(+). Functionally, catalyzes the irreversible NADPH-dependent deamination of GMP to IMP. It functions in the conversion of nucleobase, nucleoside and nucleotide derivatives of G to A nucleotides, and in maintaining the intracellular balance of A and G nucleotides. This Streptococcus pneumoniae (strain JJA) protein is GMP reductase.